A 646-amino-acid polypeptide reads, in one-letter code: Kinesin-like protein klp-20 (646 aa).

The Kinesin motor domain maps to 6–331 (KVKVVVRCRP…LRYANRAKNI (326 aa)). Residue 91 to 98 (GQTGTGKT) coordinates ATP. Residues 342–552 (KDAQLRKFQL…LRKELLLNIA (211 aa)) are a coiled coil. An interaction with klp-11 region spans residues 525 to 550 (LEEDHQRQVEAMLDDIRQLRKELLLN). Residues 623 to 646 (TAEHRPRTSSKKHRASIRLQQLLT) are disordered. Residues 629-638 (RTSSKKHRAS) are compositionally biased toward basic residues.

Belongs to the TRAFAC class myosin-kinesin ATPase superfamily. Kinesin family. Kinesin II subfamily. As to quaternary structure, component of the kinesin II motor complex, a heterotrimeric complex composed of kap-1, klp-11 and klp-20. Interacts (via C-terminus) with klp-11 (via C-terminus) to form a heterodimer. Furthermore, within the heterodimer, the C-termini of klp-20 and klp-11 interact to form a coiled coil (stalk) or tail domain, and this is necessary for association with kap-1, and kinesin II motor complex activity upon IFT cargo binding. Prior to cargo binding, the klp-11/klp-20 heterodimer is autoinhibited by the tail domain of the heterodimer, which folds onto the kinesin motor domain. Cargo binding to the heterodimer relieves the autoinhibition, and allows for an extended conformation of the tail domain, and function of the heterodimer.

It is found in the cell projection. It localises to the cilium. The protein localises to the cytoplasm. The protein resides in the cytoskeleton. Its function is as follows. Component of the kinesin II motor complex (composed of kap-1 and the heterodimeric motor proteins klp-11 and klp-20) which is required for intraflagellar transport (IFT). Heterodimerizes with klp-11 to form a 'processive' molecular motor upon IFT cargo binding, which, within the kinesin II motor complex, binds to and moves along microtubules in a unidirectional manner (without dissociation of the heterodimer), and in turn, is responsible for the IFT of cargo. Specifically, the kinesin II motor complex, together with the kinesin motor protein osm-3 moves along microtubules and is required for anterograde IFT along the middle segment of the sensory neuron cilia. In particular, the kinesin II motor complex delivers specific ciliary cargo proteins such as che-3 which are related to motility to ciliary tips. This is likely mediated by IFT complexes A and B. The sequence is that of Kinesin-like protein klp-20 from Caenorhabditis elegans.